Consider the following 205-residue polypeptide: Probable thymidylate kinase (205 aa).

An ATP-binding site is contributed by 7 to 14; that stretch reads GIDGAGKS.

It belongs to the thymidylate kinase family.

It catalyses the reaction dTMP + ATP = dTDP + ADP. The sequence is that of Probable thymidylate kinase from Thermococcus onnurineus (strain NA1).